Here is a 550-residue protein sequence, read N- to C-terminus: Chaperonin GroEL (550 aa).

Residues 30–33 (TLGP), lysine 51, 87–91 (DGTTT), glycine 415, 478–480 (NAA), and aspartate 494 each bind ATP.

This sequence belongs to the chaperonin (HSP60) family. Forms a cylinder of 14 subunits composed of two heptameric rings stacked back-to-back. Interacts with the co-chaperonin GroES.

Its subcellular location is the cytoplasm. It catalyses the reaction ATP + H2O + a folded polypeptide = ADP + phosphate + an unfolded polypeptide.. Together with its co-chaperonin GroES, plays an essential role in assisting protein folding. The GroEL-GroES system forms a nano-cage that allows encapsulation of the non-native substrate proteins and provides a physical environment optimized to promote and accelerate protein folding. In Desulfosudis oleivorans (strain DSM 6200 / JCM 39069 / Hxd3) (Desulfococcus oleovorans), this protein is Chaperonin GroEL.